Reading from the N-terminus, the 397-residue chain is Teichoic acid D-alanine hydrolase (397 aa).

The N-terminal stretch at 1 to 23 (MKFNKVKLVIHACVLLFIIISIA) is a signal peptide.

It localises to the cell membrane. It catalyses the reaction [(4-D-Ala)-(2-GlcNAc)-Rib-ol-P]n-[Gro-P]m-beta-D-ManNAc-(1-&gt;4)-alpha-D-GlcNAc-P-peptidoglycan + n H2O = [(2-GlcNAc)-Rib-ol-P]n-[Gro-P]m-beta-D-ManNAc-(1-&gt;4)-alpha-D-GlcNAc-P-peptidoglycan + n D-alanine.. Functionally, catalyzes the liberation of D-alanyl moieties present on wall teichoic acid (WTA) and lipoteichoic acid (LTA). Affects the methicillin resistance level and autolysis in the presence of Triton X-100 as well as the cell wall structure. In Staphylococcus aureus (strain NCTC 8325 / PS 47), this protein is Teichoic acid D-alanine hydrolase (fmtA).